A 466-amino-acid polypeptide reads, in one-letter code: Secreted RxLR effector protein 101 (466 aa).

The N-terminal stretch at 1-21 is a signal peptide; it reads MRGAYSVITALLVVASSQIAA. Residues 48-63 carry the RxLR-dEER motif; that stretch reads RYLRGSQHVHDSNEER. Disordered regions lie at residues 99–127 and 384–405; these read KMPHAATAGKKVSRVTRTGKKMTSHGANA and RTFNGNTDTASLPSKRSKVRSS. Over residues 109-121 the composition is skewed to basic residues; it reads KVSRVTRTGKKMT. A compositionally biased stretch (polar residues) spans 385-395; it reads TFNGNTDTASL.

Belongs to the RxLR effector family.

It localises to the secreted. It is found in the host nucleus. In terms of biological role, secreted effector that partially suppresses the host cell death induced by cell death-inducing proteins. The sequence is that of Secreted RxLR effector protein 101 from Plasmopara viticola (Downy mildew of grapevine).